The chain runs to 225 residues: DNA repair protein RecO (225 aa).

Belongs to the RecO family.

In terms of biological role, involved in DNA repair and RecF pathway recombination. This is DNA repair protein RecO from Clostridium perfringens (strain ATCC 13124 / DSM 756 / JCM 1290 / NCIMB 6125 / NCTC 8237 / Type A).